The chain runs to 340 residues: Anthranilate phosphoribosyltransferase (340 aa).

5-phospho-alpha-D-ribose 1-diphosphate-binding positions include G82, G85–D86, T90, N92–T95, K110–S118, and S122. G82 is an anthranilate binding site. Residue S94 coordinates Mg(2+). R168 contributes to the anthranilate binding site. Mg(2+)-binding residues include D227 and E228.

The protein belongs to the anthranilate phosphoribosyltransferase family. As to quaternary structure, homodimer. Mg(2+) serves as cofactor.

The catalysed reaction is N-(5-phospho-beta-D-ribosyl)anthranilate + diphosphate = 5-phospho-alpha-D-ribose 1-diphosphate + anthranilate. Its pathway is amino-acid biosynthesis; L-tryptophan biosynthesis; L-tryptophan from chorismate: step 2/5. Catalyzes the transfer of the phosphoribosyl group of 5-phosphorylribose-1-pyrophosphate (PRPP) to anthranilate to yield N-(5'-phosphoribosyl)-anthranilate (PRA). This is Anthranilate phosphoribosyltransferase from Hydrogenovibrio crunogenus (strain DSM 25203 / XCL-2) (Thiomicrospira crunogena).